Consider the following 341-residue polypeptide: MKAHFGVTVWLGVCCSMTLLMVVIGGITRLTHSGLSITEWQPIVGVVPPIGDEAWLREKEKYAQTPEYRHRAADISLDDFKRIYIIEYIHRLFGRALGAVFCLPIPYFAITKRINRAMVAKLLMVALLGGMQGAMGWFMVKSGLVDTPRVSHYRLAGHLFLTILLFSILWHSFLRCAGVRSTTTTTNARFFTAAAVVGLTVLQMVLGALVAGLDAGLTYNTFPLMDGAIIPQSLFSAKLWHGGFLHDVTAVQFLHRLVAVLIVVCAAPLPFWLKTRGAWLFLACVALQFLLGVATLVSVVHIFLAAMHQVFGFVTLAAGVHMLCRLRREGSTCISGHAGIS.

A run of 8 helical transmembrane segments spans residues 7 to 27 (VTVW…IGGI), 92 to 112 (LFGR…AITK), 118 to 138 (MVAK…MGWF), 159 to 179 (LFLT…CAGV), 190 to 210 (FFTA…GALV), 253 to 273 (FLHR…PFWL), 280 to 300 (LFLA…VSVV), and 302 to 322 (IFLA…GVHM). Position 255 (H255) interacts with heme. A heme-binding site is contributed by H308.

Belongs to the COX15/CtaA family. Type 2 subfamily. As to quaternary structure, interacts with CtaB. It depends on heme b as a cofactor.

The protein localises to the cell membrane. The enzyme catalyses Fe(II)-heme o + 2 A + H2O = Fe(II)-heme a + 2 AH2. It participates in porphyrin-containing compound metabolism; heme A biosynthesis; heme A from heme O: step 1/1. Functionally, catalyzes the conversion of heme O to heme A by two successive hydroxylations of the methyl group at C8. The first hydroxylation forms heme I, the second hydroxylation results in an unstable dihydroxymethyl group, which spontaneously dehydrates, resulting in the formyl group of heme A. This chain is Heme A synthase, found in Anaplasma marginale (strain Florida).